Here is a 307-residue protein sequence, read N- to C-terminus: Nicotinamide/nicotinic acid mononucleotide adenylyltransferase 2 (307 aa).

The NAD(+) site is built by Ser16 and Phe17. An ATP-binding site is contributed by His24. NAD(+) contacts are provided by Trp92 and Thr95. Residues Cys164 and Cys165 are each lipidated (S-palmitoyl cysteine). NAD(+) is bound by residues Gly200, Asp202, Leu212, Trp213, and Arg232. Residue 271–274 (TKSR) coordinates ATP.

This sequence belongs to the eukaryotic NMN adenylyltransferase family. In terms of assembly, monomer. Mg(2+) is required as a cofactor. Post-translationally, degraded in response to injured neurite. Degradation is caused by polyubiquitination by MYCBP2 after recognition by FBXO45. In terms of processing, palmitoylated; palmitoylation is required for membrane association.

The protein localises to the golgi apparatus membrane. The protein resides in the cytoplasmic vesicle membrane. It is found in the cytoplasm. It localises to the cell projection. Its subcellular location is the axon. It carries out the reaction beta-nicotinamide D-ribonucleotide + ATP + H(+) = diphosphate + NAD(+). The catalysed reaction is nicotinate beta-D-ribonucleotide + ATP + H(+) = deamido-NAD(+) + diphosphate. It participates in cofactor biosynthesis; NAD(+) biosynthesis; NAD(+) from nicotinamide D-ribonucleotide: step 1/1. The protein operates within cofactor biosynthesis; NAD(+) biosynthesis; deamido-NAD(+) from nicotinate D-ribonucleotide: step 1/1. Inhibited by P1-(adenosine-5')-P3-(nicotinamide-riboside-5')-triphosphate (Np3AD) and P1-(adenosine-5')-P4-(nicotinamide-riboside-5')-tetraphosphate (Np4AD). Its function is as follows. Nicotinamide/nicotinate-nucleotide adenylyltransferase that acts as an axon maintenance factor. Axon survival factor required for the maintenance of healthy axons: acts by delaying Wallerian axon degeneration, an evolutionarily conserved process that drives the loss of damaged axons. Catalyzes the formation of NAD(+) from nicotinamide mononucleotide (NMN) and ATP. Can also use the deamidated form; nicotinic acid mononucleotide (NaMN) as substrate but with a lower efficiency. Cannot use triazofurin monophosphate (TrMP) as substrate. Also catalyzes the reverse reaction, i.e. the pyrophosphorolytic cleavage of NAD(+). For the pyrophosphorolytic activity prefers NAD(+), NADH and NaAD as substrates and degrades nicotinic acid adenine dinucleotide phosphate (NHD) less effectively. Fails to cleave phosphorylated dinucleotides NADP(+), NADPH and NaADP(+). Also acts as an activator of ADP-ribosylation by supporting the catalytic activity of PARP16 and promoting mono-ADP-ribosylation of ribosomes by PARP16. May be involved in the maintenance of axonal integrity. The sequence is that of Nicotinamide/nicotinic acid mononucleotide adenylyltransferase 2 (NMNAT2) from Bos taurus (Bovine).